The sequence spans 375 residues: Queuine tRNA-ribosyltransferase (375 aa).

Catalysis depends on Asp90, which acts as the Proton acceptor. Residues 90-94 (DSGGF), Asp144, Gln190, and Gly217 each bind substrate. The RNA binding stretch occupies residues 248–254 (GIGTPHY). Asp267 serves as the catalytic Nucleophile. Residues 272–276 (TRIAR) form an RNA binding; important for wobble base 34 recognition region. Zn(2+)-binding residues include Cys305, Cys307, Cys310, and His336.

The protein belongs to the queuine tRNA-ribosyltransferase family. Homodimer. Within each dimer, one monomer is responsible for RNA recognition and catalysis, while the other monomer binds to the replacement base PreQ1. Zn(2+) is required as a cofactor.

It carries out the reaction 7-aminomethyl-7-carbaguanine + guanosine(34) in tRNA = 7-aminomethyl-7-carbaguanosine(34) in tRNA + guanine. The protein operates within tRNA modification; tRNA-queuosine biosynthesis. Functionally, catalyzes the base-exchange of a guanine (G) residue with the queuine precursor 7-aminomethyl-7-deazaguanine (PreQ1) at position 34 (anticodon wobble position) in tRNAs with GU(N) anticodons (tRNA-Asp, -Asn, -His and -Tyr). Catalysis occurs through a double-displacement mechanism. The nucleophile active site attacks the C1' of nucleotide 34 to detach the guanine base from the RNA, forming a covalent enzyme-RNA intermediate. The proton acceptor active site deprotonates the incoming PreQ1, allowing a nucleophilic attack on the C1' of the ribose to form the product. After dissociation, two additional enzymatic reactions on the tRNA convert PreQ1 to queuine (Q), resulting in the hypermodified nucleoside queuosine (7-(((4,5-cis-dihydroxy-2-cyclopenten-1-yl)amino)methyl)-7-deazaguanosine). This Borrelia recurrentis (strain A1) protein is Queuine tRNA-ribosyltransferase.